The chain runs to 345 residues: tRNA N6-adenosine threonylcarbamoyltransferase (345 aa).

2 residues coordinate Fe cation: H117 and H121. Substrate contacts are provided by residues 140–144 (LVSGG), D173, G186, and N279. D307 lines the Fe cation pocket.

This sequence belongs to the KAE1 / TsaD family. Fe(2+) serves as cofactor.

The protein localises to the cytoplasm. The catalysed reaction is L-threonylcarbamoyladenylate + adenosine(37) in tRNA = N(6)-L-threonylcarbamoyladenosine(37) in tRNA + AMP + H(+). Functionally, required for the formation of a threonylcarbamoyl group on adenosine at position 37 (t(6)A37) in tRNAs that read codons beginning with adenine. Is involved in the transfer of the threonylcarbamoyl moiety of threonylcarbamoyl-AMP (TC-AMP) to the N6 group of A37, together with TsaE and TsaB. TsaD likely plays a direct catalytic role in this reaction. The polypeptide is tRNA N6-adenosine threonylcarbamoyltransferase (Verminephrobacter eiseniae (strain EF01-2)).